Here is a 246-residue protein sequence, read N- to C-terminus: Sulfate transporter CysZ (246 aa).

Transmembrane regions (helical) follow at residues 24–44 (LFVL…IGFA), 69–89 (IVWP…FTMV), 148–168 (LLVL…WILF), and 214–234 (LLIP…ATLF).

It belongs to the CysZ family.

It localises to the cell inner membrane. Its function is as follows. High affinity, high specificity proton-dependent sulfate transporter, which mediates sulfate uptake. Provides the sulfur source for the cysteine synthesis pathway. This chain is Sulfate transporter CysZ, found in Pseudomonas aeruginosa (strain LESB58).